Reading from the N-terminus, the 289-residue chain is Rhodopsin (289 aa).

Over 1-7 (YLVNPAG) the chain is Extracellular. A helical membrane pass occupies residues 8-32 (YAALGAYMFLLILIGFPVNFLTLYV). Residues 33–44 (TLEHKKLRTPLN) are Cytoplasmic-facing. A helical membrane pass occupies residues 45–67 (YILLNLAVADLFMVLGGFTTTMY). Residues 68–81 (TSMHGYFVLGRLGC) lie on the Extracellular side of the membrane. Cysteine 81 and cysteine 158 are oxidised to a cystine. The helical transmembrane segment at 82 to 104 (NLEGFFATLGGEIALWSLVVLAI) threads the bilayer. A 'Ionic lock' involved in activated form stabilization motif is present at residues 105-107 (ERW). The Cytoplasmic segment spans residues 105–123 (ERWIVGLKPIRNFRFTEDH). A helical membrane pass occupies residues 124–144 (AIMGLAFSWVMALSCAVPPLA). Residues 145 to 173 (GWLRYIPEGIQGSCGVDYYTRAEGFNNES) are Extracellular-facing. N-linked (GlcNAc...) asparagine glycosylation is present at asparagine 171. A helical membrane pass occupies residues 174 to 195 (FVIYMFTVHFLIPLSVIFFCYG). Residues 196 to 223 (RLLCAVKEAAAAQQESETTQRAEKEVSR) lie on the Cytoplasmic side of the membrane. A helical transmembrane segment spans residues 224 to 245 (MVVIMVIGFLVCWLPYASVAWW). Residues 246–257 (IFCNQGSDFGPI) lie on the Extracellular side of the membrane. Residues 258-279 (FMTLPSFFAKRPAIYNPMIYIC) form a helical membrane-spanning segment. An N6-(retinylidene)lysine modification is found at lysine 267. Residues 280-289 (MNKQFRHCMI) lie on the Cytoplasmic side of the membrane.

This sequence belongs to the G-protein coupled receptor 1 family. Opsin subfamily. In terms of processing, phosphorylated on some or all of the serine and threonine residues present in the C-terminal region. Contains one covalently linked retinal chromophore.

It localises to the membrane. The protein resides in the cell projection. Its subcellular location is the cilium. It is found in the photoreceptor outer segment. Functionally, photoreceptor required for image-forming vision at low light intensity. While most salt water fish species use retinal as chromophore, most freshwater fish use 3-dehydroretinal, or a mixture of retinal and 3-dehydroretinal. Light-induced isomerization of 11-cis to all-trans retinal triggers a conformational change that activates signaling via G-proteins. Subsequent receptor phosphorylation mediates displacement of the bound G-protein alpha subunit by arrestin and terminates signaling. In Limnocottus pallidus (Ray-finned fish), this protein is Rhodopsin (rho).